The sequence spans 251 residues: Myozenin-3 (251 aa).

The residue at position 31 (Ser-31) is a Phosphoserine. Positions 50–67 (LLFQKRQRRVQKFTFELA) are binding to ACTN2, PPP3CA and TCAP. Residues 67-110 (AASQRAMLAGSARRKVTGTAESGTVANANGPEGPNYRSELHIFP) are binding to FLNC. The disordered stretch occupies residues 79-102 (RRKVTGTAESGTVANANGPEGPNY). A binding to ACTN2 region spans residues 186–207 (PSPNDYRNFNKTPVPFGGPLVG).

Belongs to the myozenin family. In terms of assembly, interacts with ACTN2, LDB3, FLNC, PPP3CA and TCAP. As to expression, expressed specifically in skeletal muscle. Not detected in heart.

The protein resides in the cytoplasm. Its subcellular location is the myofibril. It is found in the sarcomere. The protein localises to the z line. In terms of biological role, myozenins may serve as intracellular binding proteins involved in linking Z line proteins such as alpha-actinin, gamma-filamin, TCAP/telethonin, LDB3/ZASP and localizing calcineurin signaling to the sarcomere. Plays an important role in the modulation of calcineurin signaling. May play a role in myofibrillogenesis. The polypeptide is Myozenin-3 (Homo sapiens (Human)).